We begin with the raw amino-acid sequence, 223 residues long: HTH-type transcriptional dual regulator CecR (223 aa).

The HTH tetR-type domain maps to 11–70; it reads EQAKKQLIAAALAQFGEYGMNATTREIAAQAGQNIAAITYYFGSKEDLYLACAQWIADFI. A DNA-binding region (H-T-H motif) is located at residues 33 to 52; sequence TTREIAAQAGQNIAAITYYF.

The protein resides in the cytoplasm. Regulates transcription of the cecR-ybhGFSR operon and the rhlE gene, which altogether are involved in the control of sensitivity to cefoperazone and chloramphenicol. Represses the cecR-ybhGFSR operon and activates the rhlE operon. Acts by binding to a palindromic sequence within the intergenic spacer located between these two divergently transcribed operons. This chain is HTH-type transcriptional dual regulator CecR, found in Shigella flexneri.